A 264-amino-acid polypeptide reads, in one-letter code: Thymidylate synthase (264 aa).

Arginine 21 is a binding site for dUMP. Histidine 51 is a (6R)-5,10-methylene-5,6,7,8-tetrahydrofolate binding site. A dUMP-binding site is contributed by 126-127 (RR). Cysteine 146 (nucleophile) is an active-site residue. Residues 166–169 (RSAD), asparagine 177, and 207–209 (HLY) each bind dUMP. Aspartate 169 lines the (6R)-5,10-methylene-5,6,7,8-tetrahydrofolate pocket. Position 263 (alanine 263) interacts with (6R)-5,10-methylene-5,6,7,8-tetrahydrofolate.

This sequence belongs to the thymidylate synthase family. Bacterial-type ThyA subfamily. As to quaternary structure, homodimer.

The protein localises to the cytoplasm. The enzyme catalyses dUMP + (6R)-5,10-methylene-5,6,7,8-tetrahydrofolate = 7,8-dihydrofolate + dTMP. It participates in pyrimidine metabolism; dTTP biosynthesis. Its function is as follows. Catalyzes the reductive methylation of 2'-deoxyuridine-5'-monophosphate (dUMP) to 2'-deoxythymidine-5'-monophosphate (dTMP) while utilizing 5,10-methylenetetrahydrofolate (mTHF) as the methyl donor and reductant in the reaction, yielding dihydrofolate (DHF) as a by-product. This enzymatic reaction provides an intracellular de novo source of dTMP, an essential precursor for DNA biosynthesis. This Stutzerimonas stutzeri (strain A1501) (Pseudomonas stutzeri) protein is Thymidylate synthase.